Consider the following 544-residue polypeptide: CTP synthase (544 aa).

The tract at residues M1–L267 is amidoligase domain. S13 lines the CTP pocket. S13 lines the UTP pocket. ATP is bound by residues S14–I19 and D71. D71 and E141 together coordinate Mg(2+). CTP contacts are provided by residues D148–E150, K188–Q193, and K224. Residues K188–Q193 and K224 contribute to the UTP site. Residues K292–S534 form the Glutamine amidotransferase type-1 domain. G354 contacts L-glutamine. The active-site Nucleophile; for glutamine hydrolysis is C381. Residues L382 to Q385, E405, and R462 contribute to the L-glutamine site. Active-site residues include H507 and E509.

The protein belongs to the CTP synthase family. Homotetramer.

It carries out the reaction UTP + L-glutamine + ATP + H2O = CTP + L-glutamate + ADP + phosphate + 2 H(+). It catalyses the reaction L-glutamine + H2O = L-glutamate + NH4(+). The enzyme catalyses UTP + NH4(+) + ATP = CTP + ADP + phosphate + 2 H(+). It functions in the pathway pyrimidine metabolism; CTP biosynthesis via de novo pathway; CTP from UDP: step 2/2. Allosterically activated by GTP, when glutamine is the substrate; GTP has no effect on the reaction when ammonia is the substrate. The allosteric effector GTP functions by stabilizing the protein conformation that binds the tetrahedral intermediate(s) formed during glutamine hydrolysis. Inhibited by the product CTP, via allosteric rather than competitive inhibition. Its function is as follows. Catalyzes the ATP-dependent amination of UTP to CTP with either L-glutamine or ammonia as the source of nitrogen. Regulates intracellular CTP levels through interactions with the four ribonucleotide triphosphates. The sequence is that of CTP synthase from Parasynechococcus marenigrum (strain WH8102).